A 384-amino-acid polypeptide reads, in one-letter code: Centrosomal protein of 44 kDa (384 aa).

Residues Arg11–Glu188 are binds with microtubules and centrioles. Positions Glu191–Ser222 are disordered. Positions Gly201–Glu210 are enriched in basic and acidic residues. Coiled-coil stretches lie at residues Asn221–Ile260 and Thr353–Leu378.

In terms of assembly, binds to centriolar microtubules.

It is found in the cytoplasm. It localises to the cytoskeleton. The protein localises to the microtubule organizing center. The protein resides in the centrosome. Its subcellular location is the centriole. It is found in the spindle pole. It localises to the midbody. In terms of biological role, centriole-enriched microtubule-binding protein involved in centriole biogenesis. In collaboration with CEP295 and POC1B, is required for the centriole-to-centrosome conversion by ensuring the formation of bona fide centriole wall. Functions as a linker component that maintains centrosome cohesion. Associates with CROCC and regulates its stability and localization to the centrosome. The chain is Centrosomal protein of 44 kDa (cep44) from Xenopus laevis (African clawed frog).